We begin with the raw amino-acid sequence, 275 residues long: NH(3)-dependent NAD(+) synthetase (275 aa).

Residue 46 to 53 coordinates ATP; it reads GISGGQDS. A Mg(2+)-binding site is contributed by Asp52. Arg140 contacts deamido-NAD(+). Thr160 provides a ligand contact to ATP. Position 165 (Glu165) interacts with Mg(2+). Deamido-NAD(+)-binding residues include Lys173 and Asp180. ATP contacts are provided by Lys189 and Thr211. Position 260-261 (260-261) interacts with deamido-NAD(+); it reads HK.

Belongs to the NAD synthetase family. As to quaternary structure, homodimer.

The catalysed reaction is deamido-NAD(+) + NH4(+) + ATP = AMP + diphosphate + NAD(+) + H(+). It participates in cofactor biosynthesis; NAD(+) biosynthesis; NAD(+) from deamido-NAD(+) (ammonia route): step 1/1. Its function is as follows. Catalyzes the ATP-dependent amidation of deamido-NAD to form NAD. Uses ammonia as a nitrogen source. The chain is NH(3)-dependent NAD(+) synthetase from Escherichia coli (strain K12 / MC4100 / BW2952).